A 103-amino-acid chain; its full sequence is Large ribosomal subunit protein bL21 (103 aa).

It belongs to the bacterial ribosomal protein bL21 family. Part of the 50S ribosomal subunit. Contacts protein L20.

This protein binds to 23S rRNA in the presence of protein L20. The protein is Large ribosomal subunit protein bL21 of Psychromonas ingrahamii (strain DSM 17664 / CCUG 51855 / 37).